Here is a 293-residue protein sequence, read N- to C-terminus: uncharacterized protein (293 aa).

Residues 55 to 77 form a helical membrane-spanning segment; it reads IVLAKEIFAVAFFSLGMSCLLMA.

It localises to the membrane. This is an uncharacterized protein from Caenorhabditis elegans.